The sequence spans 158 residues: Egg cell-secreted protein 1.1 (158 aa).

The first 27 residues, 1 to 27, serve as a signal peptide directing secretion; sequence MASKSSFMATFNIVTLMLMVASSTVTA. An N-linked (GlcNAc...) asparagine glycan is attached at N122.

It belongs to the plant egg cell-secreted peptide family. Restricted to female reproductive tissues, specifically accumulating in storage vesicles of the unfertilized egg cell.

The protein localises to the cytoplasmic vesicle. It is found in the secreted. Involved in the regulation of gamete interactions during the double fertilization and to prevent multiple-pollen tube attraction; mediates the redistribution of the gamete fusogen HAP2/GCS1 to the cell surface after secretion upon sperm arrival. This is Egg cell-secreted protein 1.1 (EC1.1) from Arabidopsis thaliana (Mouse-ear cress).